The chain runs to 198 residues: Angiopoietin-like protein 8 (198 aa).

Positions 1–15 (MAVLALCLLWTLASA) are cleaved as a signal peptide.

Belongs to the ANGPTL8 family. As to quaternary structure, interacts with ANGPTL3. Post-translationally, proteolytically cleaved at the N-terminus. Expressed in liver and fat. Enriched in white and brown adipose tissues.

It localises to the secreted. Its function is as follows. Hormone that acts as a blood lipid regulator by regulating serum triglyceride levels. May be involved in the metabolic transition between fasting and refeeding: required to direct fatty acids to adipose tissue for storage in the fed state. According to a report, may act by promoting ANGPTL3 cleavage. According to another study, not required for cleavage of ANGPTL3. The polypeptide is Angiopoietin-like protein 8 (Mus musculus (Mouse)).